Here is a 2121-residue protein sequence, read N- to C-terminus: PAM2 domain-containing protein UPA2 (2121 aa).

Residues 1-17 carry the PAM2 1 motif; the sequence is MEGSSLNVAAPVFKPSG. Disordered stretches follow at residues 14-46, 262-302, 375-397, 475-507, 522-543, and 586-819; these read KPSGAANSFTPAPSQPAPPTLLSSSGPDAAVHA, QPED…SALT, AATTDHEPRSPLAHQGIPLPPST, ARRRGDSSDLNLRPSLKTTHNHTMSLGLPSSGG, ANSDEGPSKPPSEAQDLPQKPL, and DLGR…QFSR. An effector domain region spans residues 339-599; the sequence is PWPYSLGLPD…GFGYEPQSPN (261 aa). Residues 596–607 show a composition bias toward polar residues; that stretch reads QSPNAAPNGTTS. Composition is skewed to acidic residues over residues 626 to 637 and 646 to 658; these read EENDELGFDGEE and EDADASDFEEEPN. Residues 679–689 are compositionally biased toward basic and acidic residues; sequence DGHDRYADDNQ. Residues 690–712 are compositionally biased toward polar residues; it reads SHASNDDSLQDSLTPSDEQFSNP. A compositionally biased stretch (basic and acidic residues) spans 719-735; that stretch reads REERILRRQHRAAERAA. The segment covering 736-745 has biased composition (basic residues); the sequence is RRERKQRQRG. Composition is skewed to polar residues over residues 749 to 758 and 777 to 788; these read SDNTLPSSSI and NPRNGNTISNPS. Short sequence motifs (PAM2) lie at residues 858 to 874 and 920 to 937; these read SGISLLNPDAKEFKFGG and TNAAHLNVGAAPFTPGLF. Positions 950 to 960 are enriched in polar residues; sequence NSLSASPSIAV. The tract at residues 950-1012 is disordered; it reads NSLSASPSIA…PSPPRPKASA (63 aa). Residues 966 to 981 show a composition bias toward basic and acidic residues; sequence GADHRETENRDMQGRE. The PAM2 4 motif lies at 1046 to 1063; the sequence is SHESRLTADAPSFVPTWA. Disordered stretches follow at residues 1076-1096, 1119-1261, and 1337-1369; these read KRPSLPDWDQQGQQAVDKDLP, SKDD…EEES, and SHARRASDETQSTIRPLRQRNSSSDVKTANSSL. The segment covering 1198–1207 has biased composition (polar residues); it reads HSPSISQTSD. A compositionally biased stretch (acidic residues) spans 1248–1261; the sequence is GGNDEDDYEDEEES. The span at 1345–1369 shows a compositional bias: polar residues; it reads ETQSTIRPLRQRNSSSDVKTANSSL. A coiled-coil region spans residues 1783–2054; it reads LEKQAQANAD…EAKLQTLTAS (272 aa). The disordered stretch occupies residues 2099–2121; sequence SFASTAGSQGKKEVEVDEGGWWS. A GWW motif is present at residues 2118 to 2120; that stretch reads GWW.

This sequence belongs to the UPA1 PAM2 domain-binding protein family. In terms of assembly, might form homodimers via its C-terminal coiled-coil domain. Part of large ribonucleoprotein complexes (mRNPs) containing RNA-binding proteins RRM4 and PAB1, endosome-binding protein UPA1, core scaffold protein UPA2 and associated factor GRP1. Interacts (via PAM2 motifs) with PAB1.

It localises to the cytoplasm. It is found in the cytoskeleton. Its subcellular location is the endosome. Functionally, core component of endosomal mRNA transport and appears to carry out crucial scaffolding functions. The endosomal mRNA transport regulates polarity of the infectious hyphae by transporting a broad spectrum of cargo mRNAs from the nucleus to cell poles. The chain is PAM2 domain-containing protein UPA2 from Mycosarcoma maydis (Corn smut fungus).